The following is a 350-amino-acid chain: MTSATTAPHTTQTLQFHPRVAESVATQRGEGWSIQAVQELLDLPFMELLWRAQATHRTHWPQGDIELATLLSVKTGGCPENCGYCPQSAEFDTGVKAEKLMNVQEVTQAAQAAKDAGATRFCMGAAWRAPKDRDIEKISELITAVKDLGLQTCATLGMLQSHQAQALKDAGLDYYNHNLDTAPEYYSDVVSTRQYQDRLDTLRHVRDAGINVCCGGIVGMGEAPVHRAGLIAQLANLNPYPESVPINSLVRVAGTPLADSEPVDPLDFVRVIAVARITMPKARVRLSAGRQQLGDAVQALCFLAGANSIFYGDKLLVTGNPDVEADTQLLAKLGLKGTPNQTTTETACGA.

In terms of domain architecture, Radical SAM core spans 63–281 (GDIELATLLS…IAVARITMPK (219 aa)). 3 residues coordinate [4Fe-4S] cluster: C78, C82, and C85. [2Fe-2S] cluster is bound by residues C122, C153, C213, and R285.

This sequence belongs to the radical SAM superfamily. Biotin synthase family. In terms of assembly, homodimer. [4Fe-4S] cluster serves as cofactor. Requires [2Fe-2S] cluster as cofactor.

It catalyses the reaction (4R,5S)-dethiobiotin + (sulfur carrier)-SH + 2 reduced [2Fe-2S]-[ferredoxin] + 2 S-adenosyl-L-methionine = (sulfur carrier)-H + biotin + 2 5'-deoxyadenosine + 2 L-methionine + 2 oxidized [2Fe-2S]-[ferredoxin]. Its pathway is cofactor biosynthesis; biotin biosynthesis; biotin from 7,8-diaminononanoate: step 2/2. Its function is as follows. Catalyzes the conversion of dethiobiotin (DTB) to biotin by the insertion of a sulfur atom into dethiobiotin via a radical-based mechanism. The protein is Biotin synthase of Acidovorax sp. (strain JS42).